The primary structure comprises 711 residues: Hydroperoxide isomerase ALOXE3 (711 aa).

The PLAT domain occupies 2–119 (AVYRLCVTTG…TVELRPGTAR (118 aa)). Residues 120–711 (TICQDSLPLL…PPLIENSVSI (592 aa)) form the Lipoxygenase domain. 5 residues coordinate Fe cation: H408, H413, H588, N592, and I711.

Belongs to the lipoxygenase family. The cofactor is Fe cation. As to expression, skin specific.

The protein localises to the cytoplasm. It carries out the reaction a hydroperoxyeicosatetraenoate = a hydroxy-epoxy-eicosatetraenoate. The catalysed reaction is (8S)-hydroperoxy-(5Z,9E,11Z,14Z)-eicosatetraenoate = (10R)-hydroxy-(8S,9S)-epoxy-(5Z,11Z,14Z)-eicosatrienoate. It catalyses the reaction (12R)-hydroperoxy-(5Z,8Z,10E,14Z)-eicosatetraenoate = (8R)-hydroxy-(11R,12R)-epoxy-(5Z,9E,14Z)-eicosatrienoate. The enzyme catalyses (12S)-hydroperoxy-(5Z,8Z,10E,14Z)-eicosatetraenoate = (8R)-hydroxy-(11S,12S)-epoxy-(5Z,9E,14Z)-eicosatrienoate. It carries out the reaction (12S)-hydroperoxy-(5Z,8Z,10E,14Z)-eicosatetraenoate = (10R)-hydroxy-(11S,12S)-epoxy-(5Z,8Z,14Z)-eicosatrienoate. The catalysed reaction is (15S)-hydroperoxy-(5Z,8Z,11Z,13E)-eicosatetraenoate = (13R)-hydroxy-(14S,15S)-epoxy-(5Z,8Z,11Z)-eicosatrienoate. It catalyses the reaction (13S)-hydroperoxy-(9Z,11E)-octadecadienoate = 11-hydroxy-(12S,13S)-epoxy-(9Z)-octadecenoate. The enzyme catalyses (5S)-hydroperoxy-(6E,8Z,11Z,14Z)-eicosatetraenoate = 7R-hydroxy-5S,6S-epoxy-(8Z,11Z,14Z)-eicosatrienoate. It carries out the reaction N-[omega-(9R)-hydroperoxy-(10E,12Z)-octadecadienoyloxy]acyl-beta-D-glucosyl-(1&lt;-&gt;1)-octadecasphing-4E-enine = a N-[omega-(9R,10R)-epoxy-(13R)-hydroxy-(11E)-octadecenoyloxy]acyl-beta-D-glucosyl-(1&lt;-&gt;1)-sphing-4E-enine. The catalysed reaction is a N-[omega-(9R)-hydroperoxy-(10E,12Z)-octadecadienoyloxy]-acylsphin-4E-enine = a N-[omega-(9R,10R)-epoxy-(13R)-hydroxy-(11E)-octadecenoyloxy]-acylsphing-4E-enine. It catalyses the reaction a hydroperoxyeicosatetraenoate = an oxoeicosatetraenoate + H2O. The enzyme catalyses (8R)-hydroperoxy-(5Z,9E,11Z,14Z)-eicosatetraenoate = 8-oxo-(5Z,9E,11Z,14Z)-eicosatetraenoate + H2O. It carries out the reaction (8S)-hydroperoxy-(5Z,9E,11Z,14Z)-eicosatetraenoate = 8-oxo-(5Z,9E,11Z,14Z)-eicosatetraenoate + H2O. The catalysed reaction is (12R)-hydroperoxy-(5Z,8Z,10E,14Z)-eicosatetraenoate = 12-oxo-(5Z,8Z,10E,14Z)-eicosatetraenoate + H2O. It catalyses the reaction (12S)-hydroperoxy-(5Z,8Z,10E,14Z)-eicosatetraenoate = 12-oxo-(5Z,8Z,10E,14Z)-eicosatetraenoate + H2O. The enzyme catalyses (15S)-hydroperoxy-(5Z,8Z,11Z,13E)-eicosatetraenoate = 15-oxo-(5Z,8Z,11Z,13E)-eicosatetraenoate + H2O. It carries out the reaction (13S)-hydroperoxy-(9Z,11E)-octadecadienoate = 13-oxo-(9Z,11E)-octadecadienoate + H2O. Its pathway is lipid metabolism; hydroperoxy eicosatetraenoic acid biosynthesis. It participates in lipid metabolism; sphingolipid metabolism. Its function is as follows. Non-heme iron-containing lipoxygenase which is atypical in that it displays a prominent hydroperoxide isomerase activity and a reduced lipoxygenases activity. The hydroperoxide isomerase activity catalyzes the isomerization of hydroperoxides, derived from arachidonic and linoleic acid by ALOX12B, into hepoxilin-type epoxyalcohols and ketones. In presence of oxygen, oxygenates polyunsaturated fatty acids, including arachidonic acid, to produce fatty acid hydroperoxides. In the skin, acts downstream of ALOX12B on the linoleate moiety of esterified omega-hydroxyacyl-sphingosine (EOS) ceramides to produce an epoxy-ketone derivative, a crucial step in the conjugation of omega-hydroxyceramide to membrane proteins. Therefore plays a crucial role in the synthesis of corneocytes lipid envelope and the establishment of the skin barrier to water loss. In parallel, it may have a signaling function in barrier formation through the production of hepoxilins metabolites. Also plays a role in adipocyte differentiation through hepoxilin A3 and hepoxilin B3 production which in turn activate PPARG. Through the production of hepoxilins in the spinal cord, it may regulate inflammatory tactile allodynia. This Mus musculus (Mouse) protein is Hydroperoxide isomerase ALOXE3.